The chain runs to 232 residues: Lipoprotein-releasing system ATP-binding protein LolD (232 aa).

In terms of domain architecture, ABC transporter spans 11-231; the sequence is VYLHDIRRQY…SLENGHVVEL (221 aa). 47–54 contacts ATP; sequence APSGSGKS.

This sequence belongs to the ABC transporter superfamily. Lipoprotein translocase (TC 3.A.1.125) family. The complex is composed of two ATP-binding proteins (LolD) and two transmembrane proteins (LolC and LolE).

It localises to the cell inner membrane. Functionally, part of the ABC transporter complex LolCDE involved in the translocation of mature outer membrane-directed lipoproteins, from the inner membrane to the periplasmic chaperone, LolA. Responsible for the formation of the LolA-lipoprotein complex in an ATP-dependent manner. This chain is Lipoprotein-releasing system ATP-binding protein LolD, found in Nitrobacter hamburgensis (strain DSM 10229 / NCIMB 13809 / X14).